A 102-amino-acid polypeptide reads, in one-letter code: Small ribosomal subunit protein uS10 (102 aa).

It belongs to the universal ribosomal protein uS10 family. As to quaternary structure, part of the 30S ribosomal subunit.

Involved in the binding of tRNA to the ribosomes. The polypeptide is Small ribosomal subunit protein uS10 (Methanococcus maripaludis (strain C7 / ATCC BAA-1331)).